The primary structure comprises 696 residues: UvrABC system protein B (696 aa).

In terms of domain architecture, Helicase ATP-binding spans 45-434 (EGIGDGLSYQ…DEVVEQVVRP (390 aa)). 58 to 65 (GVTGSGKT) serves as a coordination point for ATP. The Beta-hairpin signature appears at 111–134 (YYDYYQPEAYVPQRDLFIEKDSSV). Positions 450 to 616 (QVDDLLSEIH…GVVKRIKDII (167 aa)) constitute a Helicase C-terminal domain. Residues 647–682 (GKEIKRLEKQMLDHAKNLEFEKAAAVRDQLAKLKSQ) form the UVR domain.

Belongs to the UvrB family. In terms of assembly, forms a heterotetramer with UvrA during the search for lesions. Interacts with UvrC in an incision complex.

The protein resides in the cytoplasm. Functionally, the UvrABC repair system catalyzes the recognition and processing of DNA lesions. A damage recognition complex composed of 2 UvrA and 2 UvrB subunits scans DNA for abnormalities. Upon binding of the UvrA(2)B(2) complex to a putative damaged site, the DNA wraps around one UvrB monomer. DNA wrap is dependent on ATP binding by UvrB and probably causes local melting of the DNA helix, facilitating insertion of UvrB beta-hairpin between the DNA strands. Then UvrB probes one DNA strand for the presence of a lesion. If a lesion is found the UvrA subunits dissociate and the UvrB-DNA preincision complex is formed. This complex is subsequently bound by UvrC and the second UvrB is released. If no lesion is found, the DNA wraps around the other UvrB subunit that will check the other stand for damage. This is UvrABC system protein B from Ralstonia nicotianae (strain ATCC BAA-1114 / GMI1000) (Ralstonia solanacearum).